The primary structure comprises 160 residues: Class II hydrophobin 8 (160 aa).

Intrachain disulfides connect C92–C141, C102–C132, C103–C115, and C142–C153.

This sequence belongs to the cerato-ulmin hydrophobin family. As to quaternary structure, homodimer. Homodimers further self-assemble to form highly ordered films at water-air interfaces through intermolecular interactions.

It localises to the secreted. The protein localises to the cell wall. Functionally, aerial growth, conidiation, and dispersal of filamentous fungi in the environment rely upon a capability of their secreting small amphipathic proteins called hydrophobins (HPBs) with low sequence identity. Class I can self-assemble into an outermost layer of rodlet bundles on aerial cell surfaces, conferring cellular hydrophobicity that supports fungal growth, development and dispersal; whereas Class II form highly ordered films at water-air interfaces through intermolecular interactions but contribute nothing to the rodlet structure. In Trichoderma asperellum (strain ATCC 204424 / CBS 433.97 / NBRC 101777), this protein is Class II hydrophobin 8.